A 138-amino-acid polypeptide reads, in one-letter code: Cysteine desulfuration protein SufE (138 aa).

The Cysteine persulfide intermediate role is filled by Cys-51.

The protein belongs to the SufE family. Homodimer. Interacts with SufS.

The protein resides in the cytoplasm. Its pathway is cofactor biosynthesis; iron-sulfur cluster biosynthesis. Functionally, participates in cysteine desulfuration mediated by SufS. Cysteine desulfuration mobilizes sulfur from L-cysteine to yield L-alanine and constitutes an essential step in sulfur metabolism for biosynthesis of a variety of sulfur-containing biomolecules. Functions as a sulfur acceptor for SufS, by mediating the direct transfer of the sulfur atom from the S-sulfanylcysteine of SufS, an intermediate product of cysteine desulfuration process. This Escherichia coli O6:K15:H31 (strain 536 / UPEC) protein is Cysteine desulfuration protein SufE.